We begin with the raw amino-acid sequence, 901 residues long: Protein translocase subunit SecA (901 aa).

ATP is bound by residues Gln87, 105–109 (GEGKT), and Asp512. The interval 852-901 (AQMQQLSHQSDDEAAAEDLAAQTGERKVGRNDPCPCGSGKKYKQCHGRLS) is disordered. Zn(2+)-binding residues include Cys885, Cys887, Cys896, and His897. The segment covering 891 to 901 (KKYKQCHGRLS) has biased composition (basic residues).

It belongs to the SecA family. In terms of assembly, monomer and homodimer. Part of the essential Sec protein translocation apparatus which comprises SecA, SecYEG and auxiliary proteins SecDF-YajC and YidC. Zn(2+) serves as cofactor.

The protein resides in the cell inner membrane. The protein localises to the cytoplasm. It carries out the reaction ATP + H2O + cellular proteinSide 1 = ADP + phosphate + cellular proteinSide 2.. In terms of biological role, part of the Sec protein translocase complex. Interacts with the SecYEG preprotein conducting channel. Has a central role in coupling the hydrolysis of ATP to the transfer of proteins into and across the cell membrane, serving both as a receptor for the preprotein-SecB complex and as an ATP-driven molecular motor driving the stepwise translocation of polypeptide chains across the membrane. This chain is Protein translocase subunit SecA, found in Klebsiella pneumoniae (strain 342).